A 77-amino-acid polypeptide reads, in one-letter code: Exodeoxyribonuclease 7 small subunit (77 aa).

It belongs to the XseB family. Heterooligomer composed of large and small subunits.

The protein resides in the cytoplasm. The enzyme catalyses Exonucleolytic cleavage in either 5'- to 3'- or 3'- to 5'-direction to yield nucleoside 5'-phosphates.. In terms of biological role, bidirectionally degrades single-stranded DNA into large acid-insoluble oligonucleotides, which are then degraded further into small acid-soluble oligonucleotides. The chain is Exodeoxyribonuclease 7 small subunit from Trichlorobacter lovleyi (strain ATCC BAA-1151 / DSM 17278 / SZ) (Geobacter lovleyi).